Here is a 402-residue protein sequence, read N- to C-terminus: Nodulation protein E (402 aa).

Positions 2–401 constitute a Ketosynthase family 3 (KS3) domain; the sequence is DRRVVITGIG…GMNAVLAFRQ (400 aa). Active-site for beta-ketoacyl synthase activity residues include Cys-162, His-294, and His-331. A helical transmembrane segment spans residues 329 to 348; it reads HAHCLGAASALEMIACVMAI.

Belongs to the thiolase-like superfamily. Beta-ketoacyl-ACP synthases family.

It localises to the cell inner membrane. Proposed to synthesize NOD factor fatty acyl chain. Involved in the synthesis of a highly unsaturated fatty acid moiety, which forms part of a lipo-oligosaccharide that is responsible for host specificity. The polypeptide is Nodulation protein E (nodE) (Rhizobium sp. (strain N33)).